We begin with the raw amino-acid sequence, 338 residues long: Glyceraldehyde-3-phosphate dehydrogenase, cytosolic (338 aa).

NAD(+) is bound by residues 13-14, Asp35, and Arg82; that span reads RI. Residues 153 to 155, Thr184, 213 to 214, and Arg236 each bind D-glyceraldehyde 3-phosphate; these read SCT and TG. Cys154 serves as the catalytic Nucleophile. Asn318 is an NAD(+) binding site.

It belongs to the glyceraldehyde-3-phosphate dehydrogenase family. As to quaternary structure, homotetramer.

Its subcellular location is the cytoplasm. It carries out the reaction D-glyceraldehyde 3-phosphate + phosphate + NAD(+) = (2R)-3-phospho-glyceroyl phosphate + NADH + H(+). Its pathway is carbohydrate degradation; glycolysis; pyruvate from D-glyceraldehyde 3-phosphate: step 1/5. In terms of biological role, key enzyme in glycolysis that catalyzes the first step of the pathway by converting D-glyceraldehyde 3-phosphate (G3P) into 3-phospho-D-glyceroyl phosphate. Essential for the maintenance of cellular ATP levels and carbohydrate metabolism. The sequence is that of Glyceraldehyde-3-phosphate dehydrogenase, cytosolic (GAPC) from Dianthus caryophyllus (Carnation).